Consider the following 336-residue polypeptide: Dihydroorotate dehydrogenase (quinone) (336 aa).

FMN contacts are provided by residues 62-66 (AGLEK) and T86. A substrate-binding site is contributed by K66. 111–115 (NRMGF) contacts substrate. Residues N139 and N172 each coordinate FMN. N172 is a binding site for substrate. Residue S175 is the Nucleophile of the active site. N177 contacts substrate. FMN-binding residues include K217 and T245. Residue 246–247 (NT) coordinates substrate. Residues G268, G297, and 318–319 (YS) each bind FMN.

Belongs to the dihydroorotate dehydrogenase family. Type 2 subfamily. In terms of assembly, monomer. It depends on FMN as a cofactor.

The protein resides in the cell membrane. It carries out the reaction (S)-dihydroorotate + a quinone = orotate + a quinol. The protein operates within pyrimidine metabolism; UMP biosynthesis via de novo pathway; orotate from (S)-dihydroorotate (quinone route): step 1/1. Functionally, catalyzes the conversion of dihydroorotate to orotate with quinone as electron acceptor. The chain is Dihydroorotate dehydrogenase (quinone) from Aliivibrio salmonicida (strain LFI1238) (Vibrio salmonicida (strain LFI1238)).